Here is a 244-residue protein sequence, read N- to C-terminus: High frequency lysogenization protein HflD homolog (244 aa).

This sequence belongs to the HflD family.

Its subcellular location is the cytoplasm. It is found in the cell inner membrane. This Acinetobacter baumannii (strain ATCC 17978 / DSM 105126 / CIP 53.77 / LMG 1025 / NCDC KC755 / 5377) protein is High frequency lysogenization protein HflD homolog.